Reading from the N-terminus, the 159-residue chain is Ribosome maturation factor RimP (159 aa).

The protein belongs to the RimP family.

Its subcellular location is the cytoplasm. In terms of biological role, required for maturation of 30S ribosomal subunits. The polypeptide is Ribosome maturation factor RimP (Geotalea uraniireducens (strain Rf4) (Geobacter uraniireducens)).